Reading from the N-terminus, the 690-residue chain is Exonuclease GOR (690 aa).

Disordered regions lie at residues 136-162 (TRVA…NRSG) and 567-690 (QPRH…SLHH). Polar residues predominate over residues 585–595 (APSTTAISPES). Positions 605-614 (KETGAVDGRR) are enriched in basic and acidic residues. Positions 612–626 (GRRGQKAKSNPNRPL) are GOR14-1 epitope. A compositionally biased stretch (low complexity) spans 631–646 (NPCRGPSGLSPSLCPS). The span at 661-682 (PPLPVPRVPAAPPRACPHPSAH) shows a compositional bias: pro residues.

The protein belongs to the REXO1/REXO3 family.

Its subcellular location is the cytoplasm. It is found in the nucleus. This chain is Exonuclease GOR (REXO1L1), found in Pan troglodytes (Chimpanzee).